The following is a 255-amino-acid chain: MSSSTGKVIIKLPKTSIPYKYVEPVLIEVDKLVNHEELVDARLRELMDKIRSENAVDMPIVVTPIPGTDKYLIVDGHHRWAAVKALGYRKIPCIIIDYFSQDVKLKTWLPGIIGDVKPVLEEAARRGLGVAECRYSVDTSGDIDAKLLEESSFIVLGRDLCRAISGGVEGQKIVSQVLNELNMKGLFTLVYYGELSEALEDLKSGWLHYLFIRKSLTKEDVMRYVRNGGVYAPKTTRHILPFYPAKTYTPLDALR.

Residue E36 is part of the active site. V74 is an O-phospho-L-serine binding site. D75 contacts Mg(2+). 7 residues coordinate O-phospho-L-serine: G76, H77, H78, W108, K234, T236, and H238.

The protein belongs to the SerK family. The cofactor is Mg(2+).

It catalyses the reaction L-serine + ATP = O-phospho-L-serine + ADP + H(+). Functionally, free serine kinase that uses ATP to phosphorylate L-serine to yield O-phospho-L-serine and ADP. The chain is ATP-dependent L-serine kinase from Desulfurococcus mucosus (strain ATCC 35584 / DSM 2162 / JCM 9187 / O7/1).